The chain runs to 97 residues: UPF0250 protein HD_2015 (97 aa).

The protein belongs to the UPF0250 family.

The chain is UPF0250 protein HD_2015 from Haemophilus ducreyi (strain 35000HP / ATCC 700724).